The following is a 380-amino-acid chain: MPNQLPADSVGLVTPQTLHFSEPLELACGISLNEYDLVYETYGQLNAAKSNAVLICHALSGHHHAAGYHRLEDKRPGWWDAYIGPGKPIDTNKFFVVALNNLGGCHGSTGPRSINPATGNVWGADFPMLRVRDWVASQARLADALGIDTWAAIIGGSLGGMQVMRWSIQYPQRVRYAVVIASAMKLSAQNIAFNEAARKAIISDPNFHNGDYLAHNTLPKNGLAVARMIGHITYLSDYAMGEKFGRDLRSGSFELGIAEPVEFQIESYLRYQGDSFAVSFDANSYIRITKALDYFDLAREYSDDPVLAFQGAQAKFLVVSFSTDWRFAPQRSREIVDALVGANKAVTYAEIESKHGHDAFLLPDARYEQVFKRYLASVEV.

The 312-residue stretch at 51-362 (NAVLICHALS…SKHGHDAFLL (312 aa)) folds into the AB hydrolase-1 domain. The Nucleophile role is filled by serine 157. Arginine 227 contributes to the substrate binding site. Catalysis depends on residues aspartate 324 and histidine 357. Substrate is bound at residue aspartate 358.

Belongs to the AB hydrolase superfamily. MetX family. As to quaternary structure, homodimer.

It is found in the cytoplasm. It carries out the reaction L-homoserine + succinyl-CoA = O-succinyl-L-homoserine + CoA. The protein operates within amino-acid biosynthesis; L-methionine biosynthesis via de novo pathway; O-succinyl-L-homoserine from L-homoserine: step 1/1. In terms of biological role, transfers a succinyl group from succinyl-CoA to L-homoserine, forming succinyl-L-homoserine. The protein is Homoserine O-succinyltransferase of Cellvibrio japonicus (strain Ueda107) (Pseudomonas fluorescens subsp. cellulosa).